The following is a 150-amino-acid chain: Flagellar assembly factor FliW (150 aa).

This sequence belongs to the FliW family. As to quaternary structure, interacts with translational regulator CsrA and flagellin(s).

Its subcellular location is the cytoplasm. In terms of biological role, acts as an anti-CsrA protein, binds CsrA and prevents it from repressing translation of its target genes, one of which is flagellin. Binds to flagellin and participates in the assembly of the flagellum. The chain is Flagellar assembly factor FliW from Caldanaerobacter subterraneus subsp. tengcongensis (strain DSM 15242 / JCM 11007 / NBRC 100824 / MB4) (Thermoanaerobacter tengcongensis).